Reading from the N-terminus, the 259-residue chain is Glutamate racemase (259 aa).

Substrate-binding positions include 12-13 (DS) and 44-45 (YG). Catalysis depends on Cys75, which acts as the Proton donor/acceptor. Residue 76 to 77 (NT) coordinates substrate. Cys186 serves as the catalytic Proton donor/acceptor. Residue 187–188 (TH) participates in substrate binding.

The protein belongs to the aspartate/glutamate racemases family.

It catalyses the reaction L-glutamate = D-glutamate. It participates in cell wall biogenesis; peptidoglycan biosynthesis. Provides the (R)-glutamate required for cell wall biosynthesis. In Clostridium novyi (strain NT), this protein is Glutamate racemase.